The sequence spans 140 residues: MAIHYETKATNVGGRKGHVYTDDRALDIDIVPPAQADGKATNPEQLFAAGYASCFNGAFDLILKQNKVRDAHPEVTLTVRLEDDPDSESPQLSVSIDATIKNVISQEEAEKYLQMAHEFCPYSKATQGNINVDLNVNVVD.

Belongs to the OsmC/Ohr family.

The sequence is that of Organic hydroperoxide resistance protein-like from Staphylococcus aureus (strain bovine RF122 / ET3-1).